The chain runs to 719 residues: Polyribonucleotide nucleotidyltransferase (719 aa).

Positions 507 and 513 each coordinate Mg(2+). The region spanning 573 to 633 (PKLELFSVDP…EQIKAAKDYI (61 aa)) is the KH domain. The region spanning 658-719 (GQEFQGIVKK…NGKISVDLCE (62 aa)) is the S1 motif domain.

Belongs to the polyribonucleotide nucleotidyltransferase family. Mg(2+) is required as a cofactor.

Its subcellular location is the cytoplasm. It catalyses the reaction RNA(n+1) + phosphate = RNA(n) + a ribonucleoside 5'-diphosphate. Involved in mRNA degradation. Catalyzes the phosphorolysis of single-stranded polyribonucleotides processively in the 3'- to 5'-direction. The protein is Polyribonucleotide nucleotidyltransferase of Campylobacter jejuni (strain RM1221).